A 102-amino-acid polypeptide reads, in one-letter code: Protein Tat (102 aa).

The interval Met-1 to Asn-24 is interaction with human CREBBP. The segment at Met-1 to Gly-48 is transactivation. Zn(2+) is bound by residues Cys-22, Cys-25, and Cys-27. Residues Cys-22–Cys-37 are cysteine-rich. At Lys-28 the chain carries N6-acetyllysine; by host PCAF. The Zn(2+) site is built by Cys-30, His-33, Cys-34, and Cys-37. Residues Phe-38–Gly-48 form a core region. The disordered stretch occupies residues Gly-48 to Gln-102. The Nuclear localization signal, RNA-binding (TAR), and protein transduction motif lies at Arg-49–Gly-57. The interaction with the host capping enzyme RNGTT stretch occupies residues Arg-49–Glu-86. N6-acetyllysine; by host EP300 and GCN5L2 occurs at positions 50 and 51. 2 positions are modified to asymmetric dimethylarginine; by host PRMT6: Arg-52 and Arg-53. A compositionally biased stretch (polar residues) spans Ser-62–Pro-77. Lys-71 participates in a covalent cross-link: Glycyl lysine isopeptide (Lys-Gly) (interchain with G-Cter in ubiquitin). Residues Arg-78–Asp-80 carry the Cell attachment site motif. Over residues Gly-83–Glu-96 the composition is skewed to basic and acidic residues.

This sequence belongs to the lentiviruses Tat family. In terms of assembly, interacts with host CCNT1. Associates with the P-TEFb complex composed at least of Tat, P-TEFb (CDK9 and CCNT1), TAR RNA, RNA Pol II. Recruits the HATs CREBBP, TAF1/TFIID, EP300, PCAF and GCN5L2. Interacts with host KAT5/Tip60; this interaction targets the latter to degradation. Interacts with the host deacetylase SIRT1. Interacts with host capping enzyme RNGTT; this interaction stimulates RNGTT. Binds to host KDR, and to the host integrins ITGAV/ITGB3 and ITGA5/ITGB1. Interacts with host KPNB1/importin beta-1 without previous binding to KPNA1/importin alpha-1. Interacts with EIF2AK2. Interacts with host nucleosome assembly protein NAP1L1; this interaction may be required for the transport of Tat within the nucleus, since the two proteins interact at the nuclear rim. Interacts with host C1QBP/SF2P32; this interaction involves lysine-acetylated Tat. Interacts with the host chemokine receptors CCR2, CCR3 and CXCR4. Interacts with host DPP4/CD26; this interaction may trigger an anti-proliferative effect. Interacts with host LDLR. Interacts with the host extracellular matrix metalloproteinase MMP1. Interacts with host PRMT6; this interaction mediates Tat's methylation. Interacts with, and is ubiquitinated by MDM2/Hdm2. Interacts with host PSMC3 and HTATIP2. Interacts with STAB1; this interaction may overcome SATB1-mediated repression of IL2 and IL2RA (interleukin) in T cells by binding to the same domain than HDAC1. Interacts (when acetylated) with human CDK13, thereby increasing HIV-1 mRNA splicing and promoting the production of the doubly spliced HIV-1 protein Nef. Interacts with host TBP; this interaction modulates the activity of transcriptional pre-initiation complex. Interacts with host RELA. Interacts with host PLSCR1; this interaction negatively regulates Tat transactivation activity by altering its subcellular distribution. In terms of processing, asymmetrical arginine methylation by host PRMT6 seems to diminish the transactivation capacity of Tat and affects the interaction with host CCNT1. Acetylation by EP300, CREBBP, GCN5L2/GCN5 and PCAF regulates the transactivation activity of Tat. EP300-mediated acetylation of Lys-50 promotes dissociation of Tat from the TAR RNA through the competitive binding to PCAF's bromodomain. In addition, the non-acetylated Tat's N-terminus can also interact with PCAF. PCAF-mediated acetylation of Lys-28 enhances Tat's binding to CCNT1. Lys-50 is deacetylated by SIRT1. Post-translationally, polyubiquitination by host MDM2 does not target Tat to degradation, but activates its transactivation function and fosters interaction with CCNT1 and TAR RNA. In terms of processing, phosphorylated by EIF2AK2 on serine and threonine residues adjacent to the basic region important for TAR RNA binding and function. Phosphorylation of Tat by EIF2AK2 is dependent on the prior activation of EIF2AK2 by dsRNA.

It localises to the host nucleus. The protein resides in the host nucleolus. It is found in the host cytoplasm. The protein localises to the secreted. Functionally, transcriptional activator that increases RNA Pol II processivity, thereby increasing the level of full-length viral transcripts. Recognizes a hairpin structure at the 5'-LTR of the nascent viral mRNAs referred to as the transactivation responsive RNA element (TAR) and recruits the cyclin T1-CDK9 complex (P-TEFb complex) that will in turn hyperphosphorylate the RNA polymerase II to allow efficient elongation. The CDK9 component of P-TEFb and other Tat-activated kinases hyperphosphorylate the C-terminus of RNA Pol II that becomes stabilized and much more processive. Other factors such as HTATSF1/Tat-SF1, SUPT5H/SPT5, and HTATIP2 are also important for Tat's function. Besides its effect on RNA Pol II processivity, Tat induces chromatin remodeling of proviral genes by recruiting the histone acetyltransferases (HATs) CREBBP, EP300 and PCAF to the chromatin. This also contributes to the increase in proviral transcription rate, especially when the provirus integrates in transcriptionally silent region of the host genome. To ensure maximal activation of the LTR, Tat mediates nuclear translocation of NF-kappa-B by interacting with host RELA. Through its interaction with host TBP, Tat may also modulate transcription initiation. Tat can reactivate a latently infected cell by penetrating in it and transactivating its LTR promoter. In the cytoplasm, Tat is thought to act as a translational activator of HIV-1 mRNAs. In terms of biological role, extracellular circulating Tat can be endocytosed by surrounding uninfected cells via the binding to several surface receptors such as CD26, CXCR4, heparan sulfate proteoglycans (HSPG) or LDLR. Neurons are rarely infected, but they internalize Tat via their LDLR. Through its interaction with nuclear HATs, Tat is potentially able to control the acetylation-dependent cellular gene expression. Modulates the expression of many cellular genes involved in cell survival, proliferation or in coding for cytokines or cytokine receptors. Tat plays a role in T-cell and neurons apoptosis. Tat induced neurotoxicity and apoptosis probably contribute to neuroAIDS. Circulating Tat also acts as a chemokine-like and/or growth factor-like molecule that binds to specific receptors on the surface of the cells, affecting many cellular pathways. In the vascular system, Tat binds to ITGAV/ITGB3 and ITGA5/ITGB1 integrins dimers at the surface of endothelial cells and competes with bFGF for heparin-binding sites, leading to an excess of soluble bFGF. This chain is Protein Tat, found in Human immunodeficiency virus type 1 group M subtype B (isolate RF/HAT3) (HIV-1).